Reading from the N-terminus, the 139-residue chain is Protein COLD-REGULATED 15A, chloroplastic (139 aa).

A chloroplast-targeting transit peptide spans 1 to 40 (MAMSFSGAVLTGMASSFHSGAKQSSFGAVRVGQKTQFVVV).

The protein belongs to the COR15 protein family. In terms of assembly, forms homooligomers which interact with potential stromal substrates in the stroma of chloroplasts. Interacts with the galactose headgroup of the chloroplast lipid monogalactosyldiacylglycerol (MGDG).

It is found in the plastid. It localises to the chloroplast stroma. Functionally, exhibits cryoprotective activity toward stromal substrates (e.g. LDH and rubisco) in chloroplasts and in protoplasts and confers freezing tolerance to plants in a CBF-dependent manner. Protectant against various stresses (e.g. cold, drought and heat stress) by preventing protein aggregation (e.g. LDH) and attenuating enzyme inactivation. Influences the intrinsic curvature of the inner membrane of the chloroplast envelope, and modulates the freeze-induced lamellar-to-hexagonal II phase transitions that occur in regions where the plasma membrane is brought into close apposition with the chloroplast envelope during freeze-induced osmotic contraction. Mediates a shift in the melting curves of phospholipids-containing membranes to lower temperatures. Involved in the regulation of leaf senescence by abscisic acid (ABA) in a VNI2-dependent manner. The protein is Protein COLD-REGULATED 15A, chloroplastic of Arabidopsis thaliana (Mouse-ear cress).